The sequence spans 536 residues: Testis-specific expressed protein 55 (536 aa).

Over residues 1–11 (MEEPPQEALAE) the composition is skewed to low complexity. Disordered stretches follow at residues 1 to 287 (MEEP…PGTS) and 328 to 348 (SNADQPPVDNAHYTESDQTDH). Residues 35-52 (QKNQAERKADNHTAHRIA) show a composition bias toward basic and acidic residues. 2 stretches are compositionally biased toward polar residues: residues 62 to 85 (QAESSIFSQATNGVAEQNGHSTPG) and 105 to 136 (QVNQTPSEQTKGKASSQANNVQHEQSDGQVSG). Basic and acidic residues-rich tracts occupy residues 138–158 (TEERTAEQTERRLPTQAERRT) and 173–222 (RGSR…ERRP). Over residues 226-242 (IDSGSSVPSDQSPSVQI) the composition is skewed to low complexity. Over residues 243–255 (DSGSSVPSDQRPS) the composition is skewed to polar residues. Over residues 339-348 (HYTESDQTDH) the composition is skewed to basic and acidic residues.

Testis-specific.

The protein resides in the nucleus. The protein localises to the cell projection. Its subcellular location is the cilium. It localises to the flagellum. This Homo sapiens (Human) protein is Testis-specific expressed protein 55.